The chain runs to 414 residues: 2,3-diketo-5-methylthiopentyl-1-phosphate enolase (414 aa).

Lys99 functions as the Proton acceptor in the catalytic mechanism. Substrate contacts are provided by residues Lys148, 174 to 177 (KDDE), His265, Gly338, and 360 to 361 (GG). The Mg(2+) site is built by Lys174, Asp176, and Glu177. The residue at position 174 (Lys174) is an N6-carboxylysine.

This sequence belongs to the RuBisCO large chain family. Type IV subfamily. In terms of assembly, homodimer. Mg(2+) is required as a cofactor.

It catalyses the reaction 5-methylsulfanyl-2,3-dioxopentyl phosphate = 2-hydroxy-5-methylsulfanyl-3-oxopent-1-enyl phosphate. It participates in amino-acid biosynthesis; L-methionine biosynthesis via salvage pathway; L-methionine from S-methyl-5-thio-alpha-D-ribose 1-phosphate: step 3/6. In terms of biological role, catalyzes the enolization of 2,3-diketo-5-methylthiopentyl-1-phosphate (DK-MTP-1-P) into 2-hydroxy-3-keto-5-methylthiopentenyl-1-phosphate (HK-MTPenyl-1-P). This chain is 2,3-diketo-5-methylthiopentyl-1-phosphate enolase, found in Bacillus cytotoxicus (strain DSM 22905 / CIP 110041 / 391-98 / NVH 391-98).